Here is a 389-residue protein sequence, read N- to C-terminus: GDSL esterase/lipase At5g14450 (389 aa).

Residues 1–30 (MKDNLERAKLMVSSTVFSWLLLCLFAVTTS) form the signal peptide. Ser48 serves as the catalytic Nucleophile. N-linked (GlcNAc...) asparagine glycans are attached at residues Asn125 and Asn335. Catalysis depends on residues Asp354 and His357.

The protein belongs to the 'GDSL' lipolytic enzyme family.

The protein localises to the secreted. The sequence is that of GDSL esterase/lipase At5g14450 from Arabidopsis thaliana (Mouse-ear cress).